A 784-amino-acid chain; its full sequence is MGSDWDEIKRLAADFQKAQLTSTLQKLSERNCVEIVTLLLEKQLLDVVFTVDGKEYITPDHLEREIQDELYVNGGRANLVEVSKALNVDLSRVVSLAERIAAENPSIHLELGQLIDEEYITHIAQEINEKLALRGEISISELASQFDLPSEFLQHKVVEKHLGKIIKGRQDTTNPRVFFTQAYIQRCKAKIRGALAAITRPTNVAVILQQIGVQEKIFHSLLDEIAPAGQVTSKMANAQYVPHVYAKTQSDWVSSFYKQNSFLEYDAIQKLGISDPKTYIRKQFPSEEFLFLKRVALGARLVELTVVTALNECSATKQYLDLSSILPSNLSEEDIEEVFAAIMAQKQSNPSNFVYLDSIVFSQPYLQQLVQPCQALAETQAKAAIDSGIYQQHIVEKTLAQKGNSSAQDLEDDGKVDKRDERRKKAASGKAGGGAQGRETKTKSTKKHARGRAAAAQNDSDDDEDVHQNTKGGGGGGNKKTVKPLELVKTADIVKLITATLEEEGLEHLAKSIASLYTSQFNQTALARAQELFEATPQTNRRQTHAAIQDRINTLLVDIRLYEKGLKLLPQDTQTQLVKYLLKSLGNDICNELSLYVAAECNLTVKNSNLNVDQRNKLAQECDAQYRSALLEQNKALNKSIDEFELATEAVLKACSMIIKKVDKKKDRLLIADHKKKLQEQLLECNDPALLLHLAALILFTTISGCILHASGKFVSAILQHIRGSLSDPQNALLLRYHDLVLQVLQSAADSSESKIAHEQLQAMQTEVIDLAQNYSRASVSKAD.

Positions 401 to 481 are disordered; sequence QKGNSSAQDL…GGGGGGNKKT (81 aa).

Belongs to the UFL1 family.

Functionally, E3 UFM1-protein ligase that mediates ufmylation of target proteins. This Drosophila ananassae (Fruit fly) protein is E3 UFM1-protein ligase 1 homolog.